The primary structure comprises 470 residues: tRNA-2-methylthio-N(6)-dimethylallyladenosine synthase (470 aa).

Residues 5–122 (RKLYVKSFGC…LPELLAEAKA (118 aa)) form the MTTase N-terminal domain. [4Fe-4S] cluster is bound by residues C14, C50, C85, C163, C167, and C170. The Radical SAM core domain maps to 149–383 (RSRGPAAFVT…LLEASKAAFD (235 aa)). A TRAM domain is found at 384 to 446 (ESCRGRTFDI…PNSLAGVPAE (63 aa)). The interval 439 to 470 (SLAGVPAEASEPSVSQSPVSSARSRPLAAMEA) is disordered. The segment covering 444–464 (PAEASEPSVSQSPVSSARSRP) has biased composition (low complexity).

It belongs to the methylthiotransferase family. MiaB subfamily. As to quaternary structure, monomer. The cofactor is [4Fe-4S] cluster.

The protein resides in the cytoplasm. It carries out the reaction N(6)-dimethylallyladenosine(37) in tRNA + (sulfur carrier)-SH + AH2 + 2 S-adenosyl-L-methionine = 2-methylsulfanyl-N(6)-dimethylallyladenosine(37) in tRNA + (sulfur carrier)-H + 5'-deoxyadenosine + L-methionine + A + S-adenosyl-L-homocysteine + 2 H(+). Catalyzes the methylthiolation of N6-(dimethylallyl)adenosine (i(6)A), leading to the formation of 2-methylthio-N6-(dimethylallyl)adenosine (ms(2)i(6)A) at position 37 in tRNAs that read codons beginning with uridine. This is tRNA-2-methylthio-N(6)-dimethylallyladenosine synthase from Xanthobacter autotrophicus (strain ATCC BAA-1158 / Py2).